A 459-amino-acid polypeptide reads, in one-letter code: Transcription factor mlcR (459 aa).

Residues 21–53 (CDRCHAQKLKCTGSNANLVRAQCQRCQQAGLRC) constitute a DNA-binding region (zn(2)-C6 fungal-type). Disordered regions lie at residues 64–84 (LHKE…PMTA) and 135–170 (DPES…DFEG). Residues 69–78 (AAGTTRATET) are compositionally biased toward low complexity.

The protein localises to the nucleus. In terms of biological role, transcription factor that regulates the gene cluster that mediates the biosynthesis of compactin, also known as mevastatin or ML-236B, and which acts as a potent competitive inhibitor of HMG-CoA reductase. Binds to the consensus-binding motif 5'-WCGG-N(6)-TCGG-3' of target genes. This chain is Transcription factor mlcR, found in Penicillium citrinum.